The sequence spans 85 residues: UPF0297 protein LGAS_0422 (85 aa).

This sequence belongs to the UPF0297 family.

In Lactobacillus gasseri (strain ATCC 33323 / DSM 20243 / BCRC 14619 / CIP 102991 / JCM 1131 / KCTC 3163 / NCIMB 11718 / NCTC 13722 / AM63), this protein is UPF0297 protein LGAS_0422.